The primary structure comprises 337 residues: Membrane-spanning 4-domains subfamily A member 18 (337 aa).

The tract at residues 101 to 121 (LGTTDLQTQPGGPQNPPTCAP) is disordered. A run of 4 helical transmembrane segments spans residues 155 to 175 (LGAI…NPSL), 183 to 203 (AISG…SLSV), 220 to 240 (MNVV…VDLI), and 252 to 272 (GGLL…SHFG).

This sequence belongs to the MS4A family.

The protein resides in the membrane. This is Membrane-spanning 4-domains subfamily A member 18 (MS4A18) from Bos taurus (Bovine).